Here is a 153-residue protein sequence, read N- to C-terminus: UPF0235 protein C15orf40 (153 aa).

The span at 1-12 (MLRLRSGLRHLR) shows a compositional bias: basic residues. Residues 1 to 55 (MLRLRSGLRHLRATPNTRGSARLLCAEMPKKAGATTKGKSQSKEPERPLPPLGPV) form a disordered region. Ser-116 carries the post-translational modification Phosphoserine.

This sequence belongs to the UPF0235 family.

The sequence is that of UPF0235 protein C15orf40 (C15orf40) from Homo sapiens (Human).